Here is a 296-residue protein sequence, read N- to C-terminus: 4-hydroxy-tetrahydrodipicolinate synthase (296 aa).

Threonine 47 contacts pyruvate. The Proton donor/acceptor role is filled by tyrosine 135. The Schiff-base intermediate with substrate role is filled by lysine 163. Position 205 (isoleucine 205) interacts with pyruvate.

The protein belongs to the DapA family. As to quaternary structure, homotetramer; dimer of dimers.

The protein resides in the cytoplasm. It catalyses the reaction L-aspartate 4-semialdehyde + pyruvate = (2S,4S)-4-hydroxy-2,3,4,5-tetrahydrodipicolinate + H2O + H(+). It functions in the pathway amino-acid biosynthesis; L-lysine biosynthesis via DAP pathway; (S)-tetrahydrodipicolinate from L-aspartate: step 3/4. In terms of biological role, catalyzes the condensation of (S)-aspartate-beta-semialdehyde [(S)-ASA] and pyruvate to 4-hydroxy-tetrahydrodipicolinate (HTPA). The polypeptide is 4-hydroxy-tetrahydrodipicolinate synthase (Macrococcus caseolyticus (strain JCSC5402) (Macrococcoides caseolyticum)).